Consider the following 195-residue polypeptide: Imidazoleglycerol-phosphate dehydratase (195 aa).

The protein belongs to the imidazoleglycerol-phosphate dehydratase family.

It localises to the cytoplasm. The catalysed reaction is D-erythro-1-(imidazol-4-yl)glycerol 3-phosphate = 3-(imidazol-4-yl)-2-oxopropyl phosphate + H2O. The protein operates within amino-acid biosynthesis; L-histidine biosynthesis; L-histidine from 5-phospho-alpha-D-ribose 1-diphosphate: step 6/9. This Jannaschia sp. (strain CCS1) protein is Imidazoleglycerol-phosphate dehydratase.